Reading from the N-terminus, the 63-residue chain is Large ribosomal subunit protein uL29 (63 aa).

It belongs to the universal ribosomal protein uL29 family.

This chain is Large ribosomal subunit protein uL29, found in Stutzerimonas stutzeri (strain A1501) (Pseudomonas stutzeri).